The chain runs to 1217 residues: MAILKRGARNKTHQEPAKRGGNNIKKAAFETSKKKEVGVSDLTLLTSISDESINDNLKKRFLNGTIYTYIGHVLISVNPFRDLGIYTDAIMKSYQGKNRLEVPPHVYAISEAMYYNLKAYNENQCVIISGESGAGKTEAAKKIMEYIAATSSTHSESIGKIKDMVLATNPLLESFGCAKTLRNNNSSRHGKYLEIRFNSQFEPCAGNITNYLLEKQRVVGQITNERNFHIFYQFTKGASDNYRQTFGVQLPEQYVYTSASKCTSVDTIDDVKDFEATIKAMQVIGLAQEEQDQIFRMLAAILWIGNISFIENEEGNAQVRDTSVTDFVAYLLQVDSQSLIKALVERIVETNHGSRRGSVYHVPLNIVQATAVRDALAKAIYNNLFEWIVDRVNKSLHAYPGADKSIGILDIYGFEIFEHNSFEQICINYVNEKLQQIFIQLTLKSEQDTYAREKIQWTPIKYFDNKVVCDLIEAKRPPGIFAAMNDSVATAHADSSAADQAFAQRLSLFSSNPHFEQRQNKFVIKHYAGDVTYDVLGMTDKNKDQLQKDLVELVGTTTNAFLTTLFPNQVDKDNKRRPPTAGDKIIKSANELVETLSKAQPSYIRTIKPNQTKSPNDYDDHQVLHQVKYLGLQENVRIRRAGFAYRQGFEKFVERFYLLSPRCSYAGDYTWTGDILEAVRLILQDALIPEKEYQLGVTQVFIKTPETLFALENMRDKFWHNMAARIQRAWRRYLQRRIDAAVKIQRTIKERKEGNKFEKLRDYGTSLLGNKKERRSMSLLGYRAFMGDYLSCNESKSNGSYIKRQAGISEKVVFSFHGEALHSKFGRSAQRLKKTFILSPTTLYIIGQVRVQNAMQYTADYKINVNSILQLNMTNLQDDWVGIVLANSSMPDPLINLSFKTELITHLKTLNSKIQVKVGPTLEYQKKPGKMHSVKCQVSDTAPKYGDVYKSSTIFVRRGNPANSKSKKKPRKKSSGMSAPTTQSSKTLAPPRMSSNNQNTTVSQSLNGGMNVKPQTPASRSAKKPAPPPPGSKKPAPQPMAKKPAPHPTPQAQMQTQTQIPASQSSATQSSIPPPPPPPPSKTSEPQFEAAYDFPGSGNPSELPLMKGDIVYITKEEPSGWSLAKTLDGSKSGWVPTAYMVKHEGAKAPPPAPAVTASQPAIQNQSQPASAQTVAATSQVPASFGDGLVSALAARANKMRVESDEEAAASSDNDDDW.

Residues Met1 to Lys11 show a composition bias toward basic residues. The interval Met1 to Ile24 is disordered. Residues Val37–Asp716 form the Myosin motor domain. Gly130 to Thr137 contacts ATP. Ser358 carries the phosphoserine modification. The interval Ser405 to Ser487 is actin-binding. IQ domains lie at His720–Ala740 and Ala741–Ser766. One can recognise a TH1 domain in the interval Lys772 to Ala962. Disordered stretches follow at residues Val956–Glu1102, Gly1145–Val1174, and Asn1197–Trp1217. Over residues Lys965 to Ser974 the composition is skewed to basic residues. Residues Gly976–Thr987 show a composition bias toward polar residues. Positions Ser994–Asn1007 are enriched in low complexity. The segment covering Pro1025 to Gln1038 has biased composition (pro residues). The segment covering Pro1050–Ser1071 has biased composition (low complexity). A compositionally biased stretch (pro residues) spans Ile1072 to Ser1081. The 63-residue stretch at Thr1083–Gly1145 folds into the SH3 domain. Positions Ile1162 to Val1174 are enriched in polar residues. Over residues Ser1203 to Trp1217 the composition is skewed to acidic residues.

The protein belongs to the TRAFAC class myosin-kinesin ATPase superfamily. Myosin family. In terms of processing, phosphorylation of the TEDS site (Ser-358) is required for the polarization of the actin cytoskeleton. Phosphorylation probably activates the myosin-I ATPase activity.

The protein localises to the cytoplasm. It is found in the cytoskeleton. Its subcellular location is the actin patch. Its function is as follows. Type-I myosin implicated in the organization of the actin cytoskeleton. Required for proper actin cytoskeleton polarization. At the cell cortex, assembles in patch-like structures together with proteins from the actin-polymerizing machinery and promotes actin assembly. Functions as actin nucleation-promoting factor (NPF) for the Arp2/3 complex. This Candida glabrata (strain ATCC 2001 / BCRC 20586 / JCM 3761 / NBRC 0622 / NRRL Y-65 / CBS 138) (Yeast) protein is Myosin-5 (MYO5).